The chain runs to 299 residues: tRNA pseudouridine synthase B (299 aa).

Asp-39 (nucleophile) is an active-site residue.

This sequence belongs to the pseudouridine synthase TruB family. Type 1 subfamily.

It catalyses the reaction uridine(55) in tRNA = pseudouridine(55) in tRNA. Responsible for synthesis of pseudouridine from uracil-55 in the psi GC loop of transfer RNAs. The sequence is that of tRNA pseudouridine synthase B from Syntrophomonas wolfei subsp. wolfei (strain DSM 2245B / Goettingen).